We begin with the raw amino-acid sequence, 416 residues long: Argininosuccinate synthase (416 aa).

ATP-binding positions include 11-19 (AYSGGLDTS) and alanine 37. Residue tyrosine 88 coordinates L-citrulline. A phosphotyrosine mark is found at tyrosine 88 and tyrosine 114. An ATP-binding site is contributed by 116–124 (AHGATGKGN). Threonine 120, asparagine 124, and aspartate 125 together coordinate L-aspartate. L-citrulline is bound at residue asparagine 124. The L-citrulline site is built by arginine 128, serine 181, serine 190, glutamate 271, and tyrosine 283. Serine 181 bears the Phosphoserine mark.

Belongs to the argininosuccinate synthase family. As to quaternary structure, homotetramer.

The protein resides in the cytoplasm. It is found in the cytosol. The catalysed reaction is L-citrulline + L-aspartate + ATP = 2-(N(omega)-L-arginino)succinate + AMP + diphosphate + H(+). The protein operates within amino-acid biosynthesis; L-arginine biosynthesis; L-arginine from L-ornithine and carbamoyl phosphate: step 2/3. Its pathway is nitrogen metabolism; urea cycle; (N(omega)-L-arginino)succinate from L-aspartate and L-citrulline: step 1/1. One of the enzymes of the urea cycle, the metabolic pathway transforming neurotoxic amonia produced by protein catabolism into inocuous urea in the liver of ureotelic animals. Catalyzes the formation of arginosuccinate from aspartate, citrulline and ATP and together with ASL it is responsible for the biosynthesis of arginine in most body tissues. The chain is Argininosuccinate synthase from Gallus gallus (Chicken).